Here is a 292-residue protein sequence, read N- to C-terminus: Small ribosomal subunit biogenesis GTPase RsgA (292 aa).

The 158-residue stretch at Arg-64–Leu-221 folds into the CP-type G domain. Residues Asn-113–Asp-116 and Gly-164–Thr-172 each bind GTP. Zn(2+)-binding residues include Cys-245, Cys-250, His-252, and Cys-258.

The protein belongs to the TRAFAC class YlqF/YawG GTPase family. RsgA subfamily. In terms of assembly, monomer. Associates with 30S ribosomal subunit, binds 16S rRNA. Zn(2+) is required as a cofactor.

The protein localises to the cytoplasm. Its function is as follows. One of several proteins that assist in the late maturation steps of the functional core of the 30S ribosomal subunit. Helps release RbfA from mature subunits. May play a role in the assembly of ribosomal proteins into the subunit. Circularly permuted GTPase that catalyzes slow GTP hydrolysis, GTPase activity is stimulated by the 30S ribosomal subunit. The chain is Small ribosomal subunit biogenesis GTPase RsgA from Clostridium botulinum (strain ATCC 19397 / Type A).